Reading from the N-terminus, the 163-residue chain is ATLPPTMEDLDIRQVAGTWHSMAMAASDISLLDSETAPLRVYVQELRPTPRDNLEIILRKRENHACIEGNIMAQRTEDPAVFMVDYQGEKKISVLDTDYTHYMFFCMEAPAPGTENGMMCQYLARTLKADNEVMEKFDRALQTLPVHIRIILDLTQGKEQCRV.

Disulfide bonds link Cys-66–Cys-161 and Cys-106–Cys-120.

It belongs to the calycin superfamily. Lipocalin family. Monomer.

The protein resides in the secreted. Functionally, lactoglobulin is the primary component of whey, it binds retinol and is probably involved in the transport of that molecule. This chain is Beta-lactoglobulin-2 (LGB2), found in Felis catus (Cat).